Reading from the N-terminus, the 196-residue chain is Holliday junction branch migration complex subunit RuvA (196 aa).

Residues 1–63 are domain I; the sequence is MYDYIKGKLS…DDAHLLFGFH (63 aa). The tract at residues 64–142 is domain II; it reads TENEKEIFLN…EASGESATSR (79 aa). The flexible linker stretch occupies residues 143–148; that stretch reads KVSSEQ. The domain III stretch occupies residues 148–196; sequence QNSNLEEAMEALLALGYKATELKKVKAFFEGTNETVEQYIKSSLKMLMK.

The protein belongs to the RuvA family. As to quaternary structure, homotetramer. Forms an RuvA(8)-RuvB(12)-Holliday junction (HJ) complex. HJ DNA is sandwiched between 2 RuvA tetramers; dsDNA enters through RuvA and exits via RuvB. An RuvB hexamer assembles on each DNA strand where it exits the tetramer. Each RuvB hexamer is contacted by two RuvA subunits (via domain III) on 2 adjacent RuvB subunits; this complex drives branch migration. In the full resolvosome a probable DNA-RuvA(4)-RuvB(12)-RuvC(2) complex forms which resolves the HJ.

The protein resides in the cytoplasm. Functionally, the RuvA-RuvB-RuvC complex processes Holliday junction (HJ) DNA during genetic recombination and DNA repair, while the RuvA-RuvB complex plays an important role in the rescue of blocked DNA replication forks via replication fork reversal (RFR). RuvA specifically binds to HJ cruciform DNA, conferring on it an open structure. The RuvB hexamer acts as an ATP-dependent pump, pulling dsDNA into and through the RuvAB complex. HJ branch migration allows RuvC to scan DNA until it finds its consensus sequence, where it cleaves and resolves the cruciform DNA. The polypeptide is Holliday junction branch migration complex subunit RuvA (Streptococcus agalactiae serotype III (strain NEM316)).